A 172-amino-acid polypeptide reads, in one-letter code: MDRAQKQESIEALKSVFADAGAVVVTHYMGMTVAEMTELRSRLRKEDATFQVVKNTLVQKALDGSIGEAGDALFTGPVAIAFGSDPVSAAKIVTQYAKENDKLKLVGGILGQTTVLDEAAVRALATLPSLDQIRGKLIGLIQAPATKIAGVLQAPAGQLARVLNAYATKDAA.

The protein belongs to the universal ribosomal protein uL10 family. As to quaternary structure, part of the ribosomal stalk of the 50S ribosomal subunit. The N-terminus interacts with L11 and the large rRNA to form the base of the stalk. The C-terminus forms an elongated spine to which L12 dimers bind in a sequential fashion forming a multimeric L10(L12)X complex.

Its function is as follows. Forms part of the ribosomal stalk, playing a central role in the interaction of the ribosome with GTP-bound translation factors. The polypeptide is Large ribosomal subunit protein uL10 (Caulobacter sp. (strain K31)).